We begin with the raw amino-acid sequence, 446 residues long: Phosphoglucosamine mutase (446 aa).

Serine 101 (phosphoserine intermediate) is an active-site residue. 4 residues coordinate Mg(2+): serine 101, aspartate 240, aspartate 242, and aspartate 244. A Phosphoserine modification is found at serine 101.

Belongs to the phosphohexose mutase family. It depends on Mg(2+) as a cofactor. Activated by phosphorylation.

The enzyme catalyses alpha-D-glucosamine 1-phosphate = D-glucosamine 6-phosphate. Functionally, catalyzes the conversion of glucosamine-6-phosphate to glucosamine-1-phosphate. This Coxiella burnetii (strain CbuK_Q154) (Coxiella burnetii (strain Q154)) protein is Phosphoglucosamine mutase.